An 803-amino-acid polypeptide reads, in one-letter code: Subtilisin-like protease SBT5.5 (803 aa).

A signal peptide spans 1–22 (MKRIFGIFIFLSLLLFLVPLLA). A propeptide spans 23–112 (SCTKEKQVYI…KSDPRKYKIH (90 aa)) (activation peptide). The 79-residue stretch at 30–108 (VYIVYFGEHK…VSVFKSDPRK (79 aa)) folds into the Inhibitor I9 domain. The Peptidase S8 domain occupies 140–656 (KYDVNDRFRV…SRHFRPTKAA (517 aa)). D169 serves as the catalytic Charge relay system. N202 is a glycosylation site (N-linked (GlcNAc...) asparagine). H244 acts as the Charge relay system in catalysis. The region spanning 409-504 (YAPLVYAPDV…VFSSTVDRIL (96 aa)) is the PA domain. Catalysis depends on S589, which acts as the Charge relay system. N725 carries N-linked (GlcNAc...) asparagine glycosylation.

This sequence belongs to the peptidase S8 family.

It localises to the secreted. This Arabidopsis thaliana (Mouse-ear cress) protein is Subtilisin-like protease SBT5.5.